The sequence spans 217 residues: GTP cyclohydrolase 1 (217 aa).

Residues Cys109, His112, and Cys180 each coordinate Zn(2+).

Belongs to the GTP cyclohydrolase I family. Toroid-shaped homodecamer, composed of two pentamers of five dimers.

It carries out the reaction GTP + H2O = 7,8-dihydroneopterin 3'-triphosphate + formate + H(+). It participates in cofactor biosynthesis; 7,8-dihydroneopterin triphosphate biosynthesis; 7,8-dihydroneopterin triphosphate from GTP: step 1/1. The protein is GTP cyclohydrolase 1 of Vibrio vulnificus (strain CMCP6).